The chain runs to 298 residues: Lipoyl synthase (298 aa).

[4Fe-4S] cluster contacts are provided by Cys-40, Cys-45, Cys-51, Cys-67, Cys-71, Cys-74, and Ser-280. The Radical SAM core domain maps to 53–269 (AVRRTATFMI…KEIALSKGFT (217 aa)).

The protein belongs to the radical SAM superfamily. Lipoyl synthase family. [4Fe-4S] cluster serves as cofactor.

Its subcellular location is the cytoplasm. It carries out the reaction [[Fe-S] cluster scaffold protein carrying a second [4Fe-4S](2+) cluster] + N(6)-octanoyl-L-lysyl-[protein] + 2 oxidized [2Fe-2S]-[ferredoxin] + 2 S-adenosyl-L-methionine + 4 H(+) = [[Fe-S] cluster scaffold protein] + N(6)-[(R)-dihydrolipoyl]-L-lysyl-[protein] + 4 Fe(3+) + 2 hydrogen sulfide + 2 5'-deoxyadenosine + 2 L-methionine + 2 reduced [2Fe-2S]-[ferredoxin]. The protein operates within protein modification; protein lipoylation via endogenous pathway; protein N(6)-(lipoyl)lysine from octanoyl-[acyl-carrier-protein]. In terms of biological role, catalyzes the radical-mediated insertion of two sulfur atoms into the C-6 and C-8 positions of the octanoyl moiety bound to the lipoyl domains of lipoate-dependent enzymes, thereby converting the octanoylated domains into lipoylated derivatives. This is Lipoyl synthase from Geobacillus sp. (strain WCH70).